Here is a 333-residue protein sequence, read N- to C-terminus: L-lactate dehydrogenase B chain (333 aa).

Residues 29–57 (GQVGMACAISILGKRLGDELALVDVWEDK) and Arg99 each bind NAD(+). Residues Arg106, Asn138, and Arg169 each coordinate substrate. Asn138 contributes to the NAD(+) binding site. Catalysis depends on His193, which acts as the Proton acceptor. Thr248 provides a ligand contact to substrate.

Belongs to the LDH/MDH superfamily. LDH family. As to quaternary structure, homotetramer.

It is found in the cytoplasm. It catalyses the reaction (S)-lactate + NAD(+) = pyruvate + NADH + H(+). The protein operates within fermentation; pyruvate fermentation to lactate; (S)-lactate from pyruvate: step 1/1. Its function is as follows. Interconverts simultaneously and stereospecifically pyruvate and lactate with concomitant interconversion of NADH and NAD(+). The protein is L-lactate dehydrogenase B chain (LDHB) of Alligator mississippiensis (American alligator).